The primary structure comprises 506 residues: Anaerobic nitric oxide reductase transcription regulator NorR (506 aa).

A 4-aspartylphosphate modification is found at aspartate 57. One can recognise a Sigma-54 factor interaction domain in the interval 187–416; it reads MIGLSPAMTQ…LEHAIHRAVV (230 aa). Residues 215–222 and 278–287 contribute to the ATP site; these read GETGTGKE and ADNGTLFLDE. The segment at residues 481-500 is a DNA-binding region (H-T-H motif); the sequence is WAASARALETDVANLHRLAK.

The protein operates within nitrogen metabolism; nitric oxide reduction. Its function is as follows. Required for the expression of anaerobic nitric oxide (NO) reductase, acts as a transcriptional activator for at least the norVW operon. Activation also requires sigma-54. In Salmonella paratyphi A (strain ATCC 9150 / SARB42), this protein is Anaerobic nitric oxide reductase transcription regulator NorR.